Consider the following 394-residue polypeptide: Endothelial cell-selective adhesion molecule (394 aa).

An N-terminal signal peptide occupies residues 1–29 (MILPARTPETSLLRVLFLGLSTLAAFSLA). The Extracellular segment spans residues 30 to 251 (QMELHVPPGL…LDVMTGSKAA (222 aa)). In terms of domain architecture, Ig-like V-type spans 37-146 (PGLNKLEAVE…DGKNIGHSIK (110 aa)). 4 N-linked (GlcNAc...) asparagine glycosylation sites follow: N111, N172, N216, and N239. Residues 156–243 (PAPPSCSFQG…GFAQCNVTLD (88 aa)) enclose the Ig-like C2-type domain. C177 and C227 are joined by a disulfide. The helical transmembrane segment at 252–272 (VVAGAVVGTFVGLVLIAGLVL) threads the bilayer. The Cytoplasmic portion of the chain corresponds to 273-394 (LYQRRSKTLE…PAQSQAGSLV (122 aa)). Residues 300 to 372 (WTKGSDTISK…SLTPGGVSSS (73 aa)) are disordered. Composition is skewed to polar residues over residues 303 to 318 (GSDTISKNGTLSSVTS) and 335 to 347 (FTPTPSVSSQALS). Phosphoserine is present on S304. T336 and T338 each carry phosphothreonine. A phosphoserine mark is found at S340, S343, and S348.

Interacts with MAGI1.

Its subcellular location is the cell junction. It is found in the adherens junction. The protein localises to the tight junction. The protein resides in the cell membrane. Functionally, can mediate aggregation most likely through a homophilic molecular interaction. This Rattus norvegicus (Rat) protein is Endothelial cell-selective adhesion molecule (Esam).